The following is a 379-amino-acid chain: Beta sliding clamp (379 aa).

The protein belongs to the beta sliding clamp family. In terms of assembly, forms a ring-shaped head-to-tail homodimer around DNA which binds and tethers DNA polymerases and other proteins to the DNA. The DNA replisome complex has a single clamp-loading complex (3 tau and 1 each of delta, delta', psi and chi subunits) which binds 3 Pol III cores (1 core on the leading strand and 2 on the lagging strand) each with a beta sliding clamp dimer. Additional proteins in the replisome are other copies of gamma, psi and chi, Ssb, DNA helicase and RNA primase.

It localises to the cytoplasm. In terms of biological role, confers DNA tethering and processivity to DNA polymerases and other proteins. Acts as a clamp, forming a ring around DNA (a reaction catalyzed by the clamp-loading complex) which diffuses in an ATP-independent manner freely and bidirectionally along dsDNA. Initially characterized for its ability to contact the catalytic subunit of DNA polymerase III (Pol III), a complex, multichain enzyme responsible for most of the replicative synthesis in bacteria; Pol III exhibits 3'-5' exonuclease proofreading activity. The beta chain is required for initiation of replication as well as for processivity of DNA replication. The polypeptide is Beta sliding clamp (dnaN) (Rickettsia felis (strain ATCC VR-1525 / URRWXCal2) (Rickettsia azadi)).